A 992-amino-acid chain; its full sequence is UPF0182 protein MT3285 (992 aa).

A run of 7 helical transmembrane segments spans residues 17 to 39, 59 to 81, 113 to 135, 169 to 191, 212 to 229, 255 to 277, and 284 to 306; these read RILI…LIDA, LATR…FGGL, LVGI…SYWA, LMLS…AHYI, LVSL…AYWL, VLPA…FSAI, and IPAI…WPLI. A disordered region spans residues 906-938; sequence PTEAAVPPSPAANPPPPASGPQPPPVTAAPPVP. A compositionally biased stretch (pro residues) spans 912–938; the sequence is PPSPAANPPPPASGPQPPPVTAAPPVP.

Belongs to the UPF0182 family.

It localises to the cell membrane. The polypeptide is UPF0182 protein MT3285 (Mycobacterium tuberculosis (strain CDC 1551 / Oshkosh)).